The following is a 181-amino-acid chain: ADP-ribosylation factor 1-like 2 (181 aa).

Glycine 2 is lipidated: N-myristoyl glycine. The tract at residues 3–16 (NVFGSLFKGLFGKK) is important for the stable binding to the membranes. Residues 24–32 (GLDAAGKTT), 126–129 (NKQD), and alanine 160 contribute to the GTP site.

The protein belongs to the small GTPase superfamily. Arf family.

Its subcellular location is the golgi apparatus membrane. The catalysed reaction is GTP + H2O = GDP + phosphate + H(+). Its activity is regulated as follows. Alternates between an inactive GDP-bound form and an active GTP-bound form. Activated by a guanine nucleotide-exchange factor (GEF) and inactivated by GTPase-activating protein (GAP). In terms of biological role, small GTPase involved in protein trafficking between different compartments. Modulates vesicle budding and uncoating within the Golgi complex. In its GTP-bound form, triggers the recruitment of coatomer proteins to the Golgi membrane. The hydrolysis of ARF1-bound GTP, which is mediated by ARFGAPs proteins, is required for dissociation of coat proteins from Golgi membranes and vesicles. Involved in endoplasmic reticulum dynamics during embryogenesis. Also required for adult germline function. Plays a role in cell shedding during embryogenesis probably by promoting the endocytosis of cell adhesion molecules. During neurogenesis, involved in cell autonomous Q.p neuroblast asymmetric divisions that generate one precursor cell and one apoptotic cell, probably by controlling endocytosis. Plays a role in maintaining mitochondrial morphology. This is ADP-ribosylation factor 1-like 2 (arf-1.2) from Caenorhabditis briggsae.